The chain runs to 307 residues: MKLQIKPPNNFAEFVGKQEIINQIQLSIKASRINKAQLDHILLYGPPGVGKTTLARLIASEMNTKLQIIQGGHLQRPSDFLNAVSLIKKGDVLFVDEIHAVAPSVMELMFPVMDDFRVQVLIGKDFNSKMVEMKVNPFTWIGATTQFGKIINPLEDRFGMILNIDYYSNQEIERIVSIYGEQMELELKPEEITQITQHSKQTPRIAIRIVKRLFEQKIVNKKIDLAALFKSLMIYKNGLQSIDVQYLKALNGQYEPQGIKSICSMLGIDKSTVENKIEPFLLRENMIQKTKKGRIITRTGRNYLTSC.

Residues Met1–Tyr167 form a large ATPase domain (RuvB-L) region. Residues Ile5, Gly48, Lys51, Thr52, Thr53, Asp114 to Phe116, Arg157, Tyr167, and Arg204 each bind ATP. Thr52 is a Mg(2+) binding site. Positions Ser168–Met233 are small ATPAse domain (RuvB-S). The tract at residues Lys236–Cys307 is head domain (RuvB-H). DNA is bound by residues Lys289 and Arg294.

It belongs to the RuvB family. In terms of assembly, homohexamer. Forms an RuvA(8)-RuvB(12)-Holliday junction (HJ) complex. HJ DNA is sandwiched between 2 RuvA tetramers; dsDNA enters through RuvA and exits via RuvB. An RuvB hexamer assembles on each DNA strand where it exits the tetramer. Each RuvB hexamer is contacted by two RuvA subunits (via domain III) on 2 adjacent RuvB subunits; this complex drives branch migration. In the full resolvosome a probable DNA-RuvA(4)-RuvB(12)-RuvC(2) complex forms which resolves the HJ.

The protein resides in the cytoplasm. It catalyses the reaction ATP + H2O = ADP + phosphate + H(+). Its function is as follows. The RuvA-RuvB-RuvC complex processes Holliday junction (HJ) DNA during genetic recombination and DNA repair, while the RuvA-RuvB complex plays an important role in the rescue of blocked DNA replication forks via replication fork reversal (RFR). RuvA specifically binds to HJ cruciform DNA, conferring on it an open structure. The RuvB hexamer acts as an ATP-dependent pump, pulling dsDNA into and through the RuvAB complex. RuvB forms 2 homohexamers on either side of HJ DNA bound by 1 or 2 RuvA tetramers; 4 subunits per hexamer contact DNA at a time. Coordinated motions by a converter formed by DNA-disengaged RuvB subunits stimulates ATP hydrolysis and nucleotide exchange. Immobilization of the converter enables RuvB to convert the ATP-contained energy into a lever motion, pulling 2 nucleotides of DNA out of the RuvA tetramer per ATP hydrolyzed, thus driving DNA branch migration. The RuvB motors rotate together with the DNA substrate, which together with the progressing nucleotide cycle form the mechanistic basis for DNA recombination by continuous HJ branch migration. Branch migration allows RuvC to scan DNA until it finds its consensus sequence, where it cleaves and resolves cruciform DNA. This is Holliday junction branch migration complex subunit RuvB from Mycoplasma pneumoniae (strain ATCC 29342 / M129 / Subtype 1) (Mycoplasmoides pneumoniae).